A 470-amino-acid polypeptide reads, in one-letter code: Proton-coupled amino acid transporter 3 (470 aa).

The Cytoplasmic portion of the chain corresponds to 1 to 46 (MSLLGRDYNSELNSLDNGPQSPSESSSSITSENVHPAGEAGLSMMQ). Residues 10–20 (SELNSLDNGPQ) are compositionally biased toward polar residues. The disordered stretch occupies residues 10-33 (SELNSLDNGPQSPSESSSSITSEN). Low complexity predominate over residues 21–31 (SPSESSSSITS). Residues 47-67 (TLIHLLKCNIGTGLLGLPLAI) form a helical membrane-spanning segment. At 68 to 71 (KNAG) the chain is on the extracellular side. Residues 72-92 (LLVGPVSLLAIGVLTVHCMVI) form a helical membrane-spanning segment. Residues 93–137 (LLNCAQHLSQRLQKTFVNYGEATMYGLETCPNTWLRAHAVWGRYT) are Cytoplasmic-facing. A helical transmembrane segment spans residues 138–158 (VSFLLVITQLGFCSVYFMFMA). At 159–185 (DNLQQMVEKAHVTSNICQPREILTLTP) the chain is on the extracellular side. The chain crosses the membrane as a helical span at residues 186–206 (ILDIRFYMLIILPFLILLVFI). The Cytoplasmic segment spans residues 207 to 210 (QNLK). A helical membrane pass occupies residues 211–231 (VLSVFSTLANITTLGSMALIF). The Extracellular portion of the chain corresponds to 232-252 (EYIMEGIPYPSNLPLMANWKT). A helical transmembrane segment spans residues 253-273 (FLLFFGTAIFTFEGVGMVLPL). The Cytoplasmic segment spans residues 274–284 (KNQMKHPQQFS). The chain crosses the membrane as a helical span at residues 285–305 (FVLYLGMSIVIILYILLGTLG). Residues 306–337 (YMKFGSDTQASITLNLPNCWLYQSVKLMYSIG) are Extracellular-facing. Residues 338 to 358 (IFFTYALQFHVPAEIIIPFAI) traverse the membrane as a helical segment. Residues 359-367 (SQVSESWAL) lie on the Cytoplasmic side of the membrane. The helical transmembrane segment at 368 to 388 (FVDLSVRSALVCLTCVSAILI) threads the bilayer. The Extracellular portion of the chain corresponds to 389 to 392 (PRLD). A helical transmembrane segment spans residues 393–413 (LVISLVGSVSSSALALIIPAL). Residues 414–425 (LEIVIFYSEDMS) lie on the Cytoplasmic side of the membrane. A helical transmembrane segment spans residues 426 to 446 (CVTIAKDIMISIVGLLGCIFG). Residues 447–470 (TYQALYELPQPISHSMANSTGVHA) lie on the Extracellular side of the membrane.

Belongs to the amino acid/polyamine transporter 2 family. In terms of tissue distribution, specifically expressed in testis.

It localises to the membrane. The chain is Proton-coupled amino acid transporter 3 (SLC36A3) from Homo sapiens (Human).